Consider the following 154-residue polypeptide: SsrA-binding protein (154 aa).

Residues 135 to 154 (KREDLKRRQDQRDMARAMKR) form a disordered region.

This sequence belongs to the SmpB family.

The protein localises to the cytoplasm. In terms of biological role, required for rescue of stalled ribosomes mediated by trans-translation. Binds to transfer-messenger RNA (tmRNA), required for stable association of tmRNA with ribosomes. tmRNA and SmpB together mimic tRNA shape, replacing the anticodon stem-loop with SmpB. tmRNA is encoded by the ssrA gene; the 2 termini fold to resemble tRNA(Ala) and it encodes a 'tag peptide', a short internal open reading frame. During trans-translation Ala-aminoacylated tmRNA acts like a tRNA, entering the A-site of stalled ribosomes, displacing the stalled mRNA. The ribosome then switches to translate the ORF on the tmRNA; the nascent peptide is terminated with the 'tag peptide' encoded by the tmRNA and targeted for degradation. The ribosome is freed to recommence translation, which seems to be the essential function of trans-translation. The polypeptide is SsrA-binding protein (Microcystis aeruginosa (strain NIES-843 / IAM M-2473)).